The chain runs to 323 residues: Methionyl-tRNA formyltransferase (323 aa).

(6S)-5,6,7,8-tetrahydrofolate is bound at residue 117-120 (SLLP).

This sequence belongs to the Fmt family.

It catalyses the reaction L-methionyl-tRNA(fMet) + (6R)-10-formyltetrahydrofolate = N-formyl-L-methionyl-tRNA(fMet) + (6S)-5,6,7,8-tetrahydrofolate + H(+). Its function is as follows. Attaches a formyl group to the free amino group of methionyl-tRNA(fMet). The formyl group appears to play a dual role in the initiator identity of N-formylmethionyl-tRNA by promoting its recognition by IF2 and preventing the misappropriation of this tRNA by the elongation apparatus. The sequence is that of Methionyl-tRNA formyltransferase from Acidovorax ebreus (strain TPSY) (Diaphorobacter sp. (strain TPSY)).